The chain runs to 101 residues: MLTDPAEEAFLPNFLLLGAGTALVLCLVFFLYQKLDQSQFAVIKLGIWGSAVGLLMDTISLWNLPLIFPALSKGQVIAFTIWMVCAYCMYLLIPLILSHKK.

The next 3 membrane-spanning stretches (helical) occupy residues 10–32 (FLPNFLLLGAGTALVLCLVFFLY), 45–67 (LGIWGSAVGLLMDTISLWNLPLI), and 77–99 (IAFTIWMVCAYCMYLLIPLILSH).

The protein localises to the cell membrane. This is an uncharacterized protein from Bacillus subtilis (strain 168).